A 388-amino-acid polypeptide reads, in one-letter code: uncharacterized protein (388 aa).

The next 8 helical transmembrane spans lie at 15 to 37 (VISA…LLVL), 97 to 119 (GFSK…VVFY), 129 to 151 (PIWG…TFLL), 158 to 175 (FIYI…FLSA), 179 to 196 (MMLA…VLFK), 203 to 225 (LAFW…YLSQ), 304 to 326 (IFIV…YIYF), and 347 to 369 (LLSV…DALL).

The protein resides in the cell membrane. This is an uncharacterized protein from Aquifex aeolicus (strain VF5).